Here is a 329-residue protein sequence, read N- to C-terminus: Cytosolic arginine sensor for mTORC1 subunit 1 (329 aa).

S14 carries the phosphoserine modification. ACT domains follow at residues 72-138 (AEAT…HTLA) and 260-321 (GELW…EVLQ). L-arginine-binding positions include 111 to 112 (SV), G274, 280 to 281 (IV), and 300 to 304 (TFNFD).

It belongs to the GATS family. In terms of assembly, forms homodimers and heterodimers with CASTOR2. Interacts with the GATOR2 complex which is composed of MIOS, SEC13, SEH1L, WDR24 and WDR59; the interaction is negatively regulated by arginine. Interacts with TM4SF5; the interaction is positively regulated by leucine and is negatively regulated by arginine. Post-translationally, phosphorylation at Ser-14 by AKT1, promoting the interaction between CASTOR1 and RNF167. Ubiquitinated by RNF167 via 'Lys-29'-polyubiquitination, leading to its degradation, releasing the GATOR2 complex. Ubiquitination by RNF167 is promoted by phosphorylation at Ser-14 by AKT1.

It localises to the cytoplasm. The protein resides in the cytosol. In terms of biological role, functions as an intracellular arginine sensor within the amino acid-sensing branch of the TORC1 signaling pathway. As a homodimer or a heterodimer with CASTOR2, binds and inhibits the GATOR subcomplex GATOR2 and thereby mTORC1. Binding of arginine to CASTOR1 allosterically disrupts the interaction of CASTOR1-containing dimers with GATOR2 which can in turn activate mTORC1 and the TORC1 signaling pathway. This Bos taurus (Bovine) protein is Cytosolic arginine sensor for mTORC1 subunit 1.